Reading from the N-terminus, the 174-residue chain is Large ribosomal subunit protein uL10 (174 aa).

It belongs to the universal ribosomal protein uL10 family. As to quaternary structure, part of the ribosomal stalk of the 50S ribosomal subunit. The N-terminus interacts with L11 and the large rRNA to form the base of the stalk. The C-terminus forms an elongated spine to which L12 dimers bind in a sequential fashion forming a multimeric L10(L12)X complex.

Its function is as follows. Forms part of the ribosomal stalk, playing a central role in the interaction of the ribosome with GTP-bound translation factors. This is Large ribosomal subunit protein uL10 from Geobacter sulfurreducens (strain ATCC 51573 / DSM 12127 / PCA).